Reading from the N-terminus, the 463-residue chain is Lipase 5 (463 aa).

Positions Met1 to Ala14 are cleaved as a signal peptide. A disulfide bridge links Cys110 with Cys281. The Charge relay system role is filled by Ser194. N-linked (GlcNAc...) asparagine glycosylation occurs at Asn229. Residues Asp343 and His376 each act as charge relay system in the active site. Cys359 and Cys404 are disulfide-bonded.

This sequence belongs to the AB hydrolase superfamily. Lipase family. Class Lip subfamily.

It localises to the secreted. The enzyme catalyses a triacylglycerol + H2O = a diacylglycerol + a fatty acid + H(+). With respect to regulation, fe(2)+, Fe(3+), Hg(2+) as well as ethylenediaminetetraacetic acid (EDTA) and phenylmethanesulfonyl fluoride (PMSF) strongly inhibit the lipase activity. Surfactants such as Tween 20, Tween 80 and TritonX-100 show also inhibitory effect in the lipase activity. Sodium dodecyl sulfate (SDS) sharply decreases the lipase activity by 85%. Methanol, ethanol, and acetone have also negative effect on the lipase activity, with residual activities at 48%, 24% and 44% respectively. Finally, lipase activity is almost lost in the presence of isopropanol alcohol. Its function is as follows. Secreted lipase that is able to hydrolyze both the neutral triacylglycerols and the monopalmitate ester Tween 40, allowing the use of hydrolyzed products as carbon sources. Exhibits a preference for the short and medium chain length p-NP (C4 and C8 acyl group) esters rather than the long chain length p-NP esters (C12, C16 and C18 acyl group). Has broad lipolytic activity, which may be important for colonization and subsequent infection, therefore contributing to the persistence and virulence in human tissue. The polypeptide is Lipase 5 (Candida albicans (strain SC5314 / ATCC MYA-2876) (Yeast)).